The primary structure comprises 235 residues: Uracil-DNA glycosylase (235 aa).

The active-site Proton acceptor is Asp71.

This sequence belongs to the uracil-DNA glycosylase (UDG) superfamily. UNG family.

Its subcellular location is the cytoplasm. The enzyme catalyses Hydrolyzes single-stranded DNA or mismatched double-stranded DNA and polynucleotides, releasing free uracil.. Excises uracil residues from the DNA which can arise as a result of misincorporation of dUMP residues by DNA polymerase or due to deamination of cytosine. The protein is Uracil-DNA glycosylase of Campylobacter hominis (strain ATCC BAA-381 / DSM 21671 / CCUG 45161 / LMG 19568 / NCTC 13146 / CH001A).